The primary structure comprises 358 residues: DNA-directed RNA polymerase subunit alpha (358 aa).

Residues Met-1–Ser-231 form an alpha N-terminal domain (alpha-NTD) region. The tract at residues Gln-266–Ser-358 is alpha C-terminal domain (alpha-CTD).

This sequence belongs to the RNA polymerase alpha chain family. In terms of assembly, in plastids the minimal PEP RNA polymerase catalytic core is composed of four subunits: alpha, beta, beta', and beta''. When a (nuclear-encoded) sigma factor is associated with the core the holoenzyme is formed, which can initiate transcription.

It localises to the plastid. Its subcellular location is the chloroplast. The catalysed reaction is RNA(n) + a ribonucleoside 5'-triphosphate = RNA(n+1) + diphosphate. Its function is as follows. DNA-dependent RNA polymerase catalyzes the transcription of DNA into RNA using the four ribonucleoside triphosphates as substrates. This chain is DNA-directed RNA polymerase subunit alpha, found in Chara vulgaris (Common stonewort).